The chain runs to 217 residues: Membrane-associated progesterone receptor component 2 (217 aa).

O-linked (Xyl...) (chondroitin sulfate) serine glycosylation occurs at S15. Residues 40–62 (ALLATGGEMLLNVALVALVLLGA) form a helical membrane-spanning segment. Phosphoserine occurs at positions 84, 98, and 202. Residues 96-195 (DFSLEQLRQY…EKYDYVGRLL (100 aa)) form the Cytochrome b5 heme-binding domain. The interval 196–217 (KPGEEPSEYTDEEDTKDHSKQD) is disordered. Residues 200 to 209 (EPSEYTDEED) show a composition bias toward acidic residues. Phosphotyrosine is present on Y204. A Phosphothreonine modification is found at T205.

It belongs to the cytochrome b5 family. MAPR subfamily. As to quaternary structure, interacts with PGRMC1. Interacts with AAAS.

Its subcellular location is the membrane. It localises to the nucleus envelope. The protein resides in the endoplasmic reticulum. The protein localises to the secreted. Its function is as follows. Required for the maintenance of uterine histoarchitecture and normal female reproductive lifespan. May serve as a universal non-classical progesterone receptor in the uterus. Intracellular heme chaperone required for delivery of labile, or signaling heme, to the nucleus. Plays a role in adipocyte function and systemic glucose homeostasis. In brown fat, which has a high demand for heme, delivery of labile heme in the nucleus regulates the activity of heme-responsive transcriptional repressors such as NR1D1 and BACH1. The polypeptide is Membrane-associated progesterone receptor component 2 (Rattus norvegicus (Rat)).